The sequence spans 258 residues: 5-oxoprolinase subunit A 2 (258 aa).

This sequence belongs to the LamB/PxpA family. As to quaternary structure, forms a complex composed of PxpA, PxpB and PxpC.

The enzyme catalyses 5-oxo-L-proline + ATP + 2 H2O = L-glutamate + ADP + phosphate + H(+). Its function is as follows. Catalyzes the cleavage of 5-oxoproline to form L-glutamate coupled to the hydrolysis of ATP to ADP and inorganic phosphate. This is 5-oxoprolinase subunit A 2 from Pseudomonas putida (strain ATCC 47054 / DSM 6125 / CFBP 8728 / NCIMB 11950 / KT2440).